We begin with the raw amino-acid sequence, 332 residues long: Glycerol-3-phosphate dehydrogenase [NAD(P)+] (332 aa).

Residues S11, W12, R32, R33, and K106 each coordinate NADPH. Positions 106 and 136 each coordinate sn-glycerol 3-phosphate. A140 lines the NADPH pocket. Sn-glycerol 3-phosphate contacts are provided by K191, D244, S254, R255, and N256. K191 acts as the Proton acceptor in catalysis. R255 lines the NADPH pocket. V280 and E282 together coordinate NADPH.

The protein belongs to the NAD-dependent glycerol-3-phosphate dehydrogenase family.

Its subcellular location is the cytoplasm. It carries out the reaction sn-glycerol 3-phosphate + NAD(+) = dihydroxyacetone phosphate + NADH + H(+). The enzyme catalyses sn-glycerol 3-phosphate + NADP(+) = dihydroxyacetone phosphate + NADPH + H(+). It participates in membrane lipid metabolism; glycerophospholipid metabolism. Its function is as follows. Catalyzes the reduction of the glycolytic intermediate dihydroxyacetone phosphate (DHAP) to sn-glycerol 3-phosphate (G3P), the key precursor for phospholipid synthesis. The polypeptide is Glycerol-3-phosphate dehydrogenase [NAD(P)+] (Corynebacterium kroppenstedtii (strain DSM 44385 / JCM 11950 / CIP 105744 / CCUG 35717)).